The sequence spans 237 residues: Fluoroquinolones export permease protein MT2761 (237 aa).

6 helical membrane-spanning segments follow: residues 20–40 (FLHAAVFSGLIWLAVLLPMPV), 49–69 (YVLVGDIAIIGFFFVGGTVFF), 96–116 (VLLAISLFVAVVVATIVHGLG), 119–139 (LLPLVAGIVLGTLLMLLVGFS), 147–167 (VTDWFLAAVIPLAIMLAPPVV), and 199–219 (LAPWQVGYAVVYPIVCAAGLC).

The complex is composed of 2 ATP-binding proteins and 2 transmembrane proteins.

The protein resides in the cell membrane. Part of the ABC transporter complex involved in fluoroquinolones export. Probably responsible for the translocation of the substrate across the membrane. The chain is Fluoroquinolones export permease protein MT2761 from Mycobacterium tuberculosis (strain CDC 1551 / Oshkosh).